A 173-amino-acid polypeptide reads, in one-letter code: Calcium-binding protein 5 (173 aa).

EF-hand domains are found at residues 28–63 (DELD…MGYM), 82–99 (GRVD…KLLA), 105–140 (IGVQ…LLGE), and 142–173 (LTPR…MMSR). Positions 41, 43, 45, and 52 each coordinate Ca(2+). Asp-118, Asn-120, Asp-122, Glu-124, Glu-129, Asp-155, Asn-157, Asp-159, Thr-161, and Glu-166 together coordinate Ca(2+).

In terms of assembly, interacts with CACNA1C (via C-terminal CDB motif) in a calcium-dependent manner. Interacts with STXBP1. Interacts with MYO6. As to expression, expressed in inner and outer plexiform layers of the retina, and retinal bipolar cells (at protein level). Expressed in the inner hair cells (IHC) of the cochlea.

It is found in the cytoplasm. Functionally, inhibits calcium-dependent inactivation of L-type calcium channel and shifts voltage dependence of activation to more depolarized membrane potentials. Involved in the transmission of light signals. May positively regulate neurotransmitter vesicle endocytosis and exocytosis in a salt-dependent manner. May play a role in the extension and network organization of neurites. The protein is Calcium-binding protein 5 (Cabp5) of Mus musculus (Mouse).